The primary structure comprises 316 residues: D-alanine--D-alanine ligase (316 aa).

In terms of domain architecture, ATP-grasp spans 104–303 (KRVWLQHGLP…YADLCVAILA (200 aa)). 130 to 185 (PDRLGLPLILKPPHEGSTVGITKVAGYSDMKAAYELAARFDAEVLAEQFITGRELT) serves as a coordination point for ATP. Residues D257, E270, and N272 each coordinate Mg(2+).

Belongs to the D-alanine--D-alanine ligase family. Requires Mg(2+) as cofactor. Mn(2+) serves as cofactor.

The protein localises to the cytoplasm. It catalyses the reaction 2 D-alanine + ATP = D-alanyl-D-alanine + ADP + phosphate + H(+). It participates in cell wall biogenesis; peptidoglycan biosynthesis. Functionally, cell wall formation. The sequence is that of D-alanine--D-alanine ligase from Bordetella parapertussis (strain 12822 / ATCC BAA-587 / NCTC 13253).